Consider the following 477-residue polypeptide: Aspartyl/glutamyl-tRNA(Asn/Gln) amidotransferase subunit B (477 aa).

The protein belongs to the GatB/GatE family. GatB subfamily. In terms of assembly, heterotrimer of A, B and C subunits.

It catalyses the reaction L-glutamyl-tRNA(Gln) + L-glutamine + ATP + H2O = L-glutaminyl-tRNA(Gln) + L-glutamate + ADP + phosphate + H(+). The catalysed reaction is L-aspartyl-tRNA(Asn) + L-glutamine + ATP + H2O = L-asparaginyl-tRNA(Asn) + L-glutamate + ADP + phosphate + 2 H(+). Its function is as follows. Allows the formation of correctly charged Asn-tRNA(Asn) or Gln-tRNA(Gln) through the transamidation of misacylated Asp-tRNA(Asn) or Glu-tRNA(Gln) in organisms which lack either or both of asparaginyl-tRNA or glutaminyl-tRNA synthetases. The reaction takes place in the presence of glutamine and ATP through an activated phospho-Asp-tRNA(Asn) or phospho-Glu-tRNA(Gln). In Thioalkalivibrio sulfidiphilus (strain HL-EbGR7), this protein is Aspartyl/glutamyl-tRNA(Asn/Gln) amidotransferase subunit B.